Consider the following 414-residue polypeptide: UPF0754 membrane protein tlr2287 (414 aa).

2 helical membrane-spanning segments follow: residues alanine 2–phenylalanine 22 and alanine 386–leucine 406.

Belongs to the UPF0754 family.

The protein resides in the cell inner membrane. The protein is UPF0754 membrane protein tlr2287 of Thermosynechococcus vestitus (strain NIES-2133 / IAM M-273 / BP-1).